Reading from the N-terminus, the 151-residue chain is Ribosome maturation factor RimP (151 aa).

Belongs to the RimP family.

It is found in the cytoplasm. Functionally, required for maturation of 30S ribosomal subunits. The protein is Ribosome maturation factor RimP of Caldicellulosiruptor bescii (strain ATCC BAA-1888 / DSM 6725 / KCTC 15123 / Z-1320) (Anaerocellum thermophilum).